Reading from the N-terminus, the 463-residue chain is ATP-dependent protease ATPase subunit HslU (463 aa).

ATP-binding positions include Ile-19, Gly-61–Glu-66, Asp-277, Glu-341, and Arg-413.

The protein belongs to the ClpX chaperone family. HslU subfamily. In terms of assembly, a double ring-shaped homohexamer of HslV is capped on each side by a ring-shaped HslU homohexamer. The assembly of the HslU/HslV complex is dependent on binding of ATP.

It is found in the cytoplasm. ATPase subunit of a proteasome-like degradation complex; this subunit has chaperone activity. The binding of ATP and its subsequent hydrolysis by HslU are essential for unfolding of protein substrates subsequently hydrolyzed by HslV. HslU recognizes the N-terminal part of its protein substrates and unfolds these before they are guided to HslV for hydrolysis. This Bacillus cytotoxicus (strain DSM 22905 / CIP 110041 / 391-98 / NVH 391-98) protein is ATP-dependent protease ATPase subunit HslU.